The chain runs to 477 residues: Proton-coupled amino acid transporter 3 (477 aa).

Positions 1–13 are enriched in basic and acidic residues; it reads MGKTPLLREDGRC. The disordered stretch occupies residues 1–42; that stretch reads MGKTPLLREDGRCQRNTFGGSKASSKGSSSSSSNNTVSSKKK. Over 1–54 the chain is Cytoplasmic; that stretch reads MGKTPLLREDGRCQRNTFGGSKASSKGSSSSSSNNTVSSKKKPRRKADALMFIQ. Low complexity predominate over residues 19-38; that stretch reads GGSKASSKGSSSSSSNNTVS. Residues 55-75 traverse the membrane as a helical segment; the sequence is IFIHLLKSNIGTGFLGLPLAV. The Extracellular segment spans residues 76-77; the sequence is KN. Residues 78–98 traverse the membrane as a helical segment; that stretch reads AGLLVGPVSLLAIGALTVHCM. Topologically, residues 99 to 144 are cytoplasmic; the sequence is DILLNCACHLTSRLQRSFVNYEETTMYSLETCPSPWLRTHSVWGRY. A helical transmembrane segment spans residues 145-165; that stretch reads VVSFLLIVTQLGFCSVYFMFM. The Extracellular portion of the chain corresponds to 166 to 202; the sequence is ADNLQQIVEEAHFTSNVCQPRQSLVMTSILDTRFYML. Residues 203-223 form a helical membrane-spanning segment; sequence TILPFLILLVLVQNPQVLSIF. Over 224 to 225 the chain is Cytoplasmic; it reads ST. The chain crosses the membrane as a helical span at residues 226 to 246; that stretch reads LATITTLSSLALIFEYLIQIP. The Extracellular segment spans residues 247–259; that stretch reads HHSHLPLVASWKT. Residues 260–280 form a helical membrane-spanning segment; it reads FLLFFGTAIFTFEGVGMVLPL. The Cytoplasmic segment spans residues 281 to 291; it reads KSQMKSPQQFP. Residues 292-312 traverse the membrane as a helical segment; it reads AVLYLGMSFVIFLYICLGTLG. The Extracellular portion of the chain corresponds to 313 to 344; that stretch reads YMKFGADTQASITLNLPNCWLYQSVKLMYSVG. The chain crosses the membrane as a helical span at residues 345–365; that stretch reads IFFTYALQFHVPAEIIVPYVV. At 366-374 the chain is on the cytoplasmic side; sequence SRASENWAL. A helical membrane pass occupies residues 375–395; sequence FIDLTVRAALVCLTCFSAVLI. The Extracellular segment spans residues 396–399; the sequence is PRLD. A helical membrane pass occupies residues 400 to 420; the sequence is LVISLVGSVSSSALALIIPPL. Over 421–439 the chain is Cytoplasmic; that stretch reads LEIATFYSENISCTTIAKD. Residues 440–460 form a helical membrane-spanning segment; sequence IMISILGLLGCVLGTYQALYE. Residues 461–477 lie on the Extracellular side of the membrane; it reads MTQQSRFPMLNSTNVHT.

The protein belongs to the amino acid/polyamine transporter 2 family.

It is found in the membrane. The sequence is that of Proton-coupled amino acid transporter 3 (Slc36a3) from Rattus norvegicus (Rat).